The sequence spans 1040 residues: Desmoglein-4 (1040 aa).

The first 23 residues, 1 to 23 (MDWLLFRNICLLILFMVVLGVNS), serve as a signal peptide directing secretion. The propeptide occupies 24–49 (EFIVEVKELDIENGTTTWQTVRRQKR). 4 consecutive Cadherin domains span residues 50-157 (EWIK…PPVF), 158-269 (TQNV…FPIL), 270-385 (EKTS…GPTF), and 389-497 (SMTF…CPVI). Topologically, residues 50-633 (EWIKFAAACR…RQSNVGLGPA (584 aa)) are extracellular. N-linked (GlcNAc...) asparagine glycosylation is present at Asn-110. A glycan (N-linked (GlcNAc...) asparagine) is linked at Asn-545. The chain crosses the membrane as a helical span at residues 634-654 (GIGMIILGLLLLFLSPLLLLM). The Cytoplasmic segment spans residues 655–1040 (CCCKRRQPEG…RYSNIHYSRQ (386 aa)). 2 Desmoglein repeat repeats span residues 883-909 (TLSE…IVTE) and 910-940 (TYTA…ETVM). A disordered region spans residues 1015–1040 (QTTRSTSPMTSQHRVTRYSNIHYSRQ).

In terms of assembly, interacts with JUP.

It is found in the cell membrane. It localises to the cell junction. Its subcellular location is the desmosome. Functionally, a component of desmosome cell-cell junctions which are required for positive regulation of cellular adhesion. Coordinates the transition from proliferation to differentiation in hair follicle keratinocytes. Plays a role in moderating lymphocyte migration to inflamed skin and maintaining homeostasis of the epidermal inflammatory response. The polypeptide is Desmoglein-4 (Dsg4) (Rattus norvegicus (Rat)).